A 285-amino-acid chain; its full sequence is Ribosomal RNA small subunit methyltransferase H (285 aa).

S-adenosyl-L-methionine contacts are provided by residues 34–36 (AGH), D51, F75, D96, and H103. Residues 259 to 285 (LVPSEKEAAQNPRARSAKLRAAEKEAP) are disordered.

It belongs to the methyltransferase superfamily. RsmH family.

Its subcellular location is the cytoplasm. It carries out the reaction cytidine(1402) in 16S rRNA + S-adenosyl-L-methionine = N(4)-methylcytidine(1402) in 16S rRNA + S-adenosyl-L-homocysteine + H(+). Functionally, specifically methylates the N4 position of cytidine in position 1402 (C1402) of 16S rRNA. In Thermus thermophilus (strain ATCC 27634 / DSM 579 / HB8), this protein is Ribosomal RNA small subunit methyltransferase H.